The primary structure comprises 234 residues: Ubiquitin domain-containing protein 2 (234 aa).

A disordered region spans residues 1-46; that stretch reads MGGCVGAQHDSSGSLNENSDGTGVALGRNQPLKKEKPKWKSDYPMT. The span at 9–21 shows a compositional bias: polar residues; sequence HDSSGSLNENSDG. The segment covering 32-41 has biased composition (basic and acidic residues); the sequence is LKKEKPKWKS. The Ubiquitin-like domain maps to 152–227; sequence SQLRLRLSTG…VQVIVSQPVQ (76 aa).

It is found in the cytoplasm. This chain is Ubiquitin domain-containing protein 2 (Ubtd2), found in Mus musculus (Mouse).